A 474-amino-acid chain; its full sequence is Cysteine--tRNA ligase (474 aa).

Cys27 serves as a coordination point for Zn(2+). Positions 29-39 match the 'HIGH' region motif; that stretch reads PTVYNYIHIGN. Residues Cys212, His237, and Glu241 each coordinate Zn(2+). The 'KMSKS' region signature appears at 271-275; sequence KMSKS. ATP is bound at residue Lys274.

This sequence belongs to the class-I aminoacyl-tRNA synthetase family. As to quaternary structure, monomer. The cofactor is Zn(2+).

It is found in the cytoplasm. The enzyme catalyses tRNA(Cys) + L-cysteine + ATP = L-cysteinyl-tRNA(Cys) + AMP + diphosphate. This Lactobacillus delbrueckii subsp. bulgaricus (strain ATCC BAA-365 / Lb-18) protein is Cysteine--tRNA ligase.